Reading from the N-terminus, the 239-residue chain is ATP-dependent dethiobiotin synthetase BioD (239 aa).

15–20 is an ATP binding site; it reads EIGKTF. T19 provides a ligand contact to Mg(2+). Residue K40 is part of the active site. Residues D57, 118 to 121, and 178 to 179 contribute to the ATP site; these read EGVG and NH. 2 residues coordinate Mg(2+): D57 and E118.

It belongs to the dethiobiotin synthetase family. In terms of assembly, homodimer. It depends on Mg(2+) as a cofactor.

The protein localises to the cytoplasm. The catalysed reaction is (7R,8S)-7,8-diammoniononanoate + CO2 + ATP = (4R,5S)-dethiobiotin + ADP + phosphate + 3 H(+). Its pathway is cofactor biosynthesis; biotin biosynthesis; biotin from 7,8-diaminononanoate: step 1/2. In terms of biological role, catalyzes a mechanistically unusual reaction, the ATP-dependent insertion of CO2 between the N7 and N8 nitrogen atoms of 7,8-diaminopelargonic acid (DAPA, also called 7,8-diammoniononanoate) to form a ureido ring. The polypeptide is ATP-dependent dethiobiotin synthetase BioD (Burkholderia ambifaria (strain ATCC BAA-244 / DSM 16087 / CCUG 44356 / LMG 19182 / AMMD) (Burkholderia cepacia (strain AMMD))).